The primary structure comprises 123 residues: Small ribosomal subunit protein uS13 (123 aa).

Over residues 99–113 (RGQRTHTNARTRKGG) the composition is skewed to basic residues. A disordered region spans residues 99-123 (RGQRTHTNARTRKGGSRLAVAAKKK).

This sequence belongs to the universal ribosomal protein uS13 family. Part of the 30S ribosomal subunit. Forms a loose heterodimer with protein S19. Forms two bridges to the 50S subunit in the 70S ribosome.

Located at the top of the head of the 30S subunit, it contacts several helices of the 16S rRNA. In the 70S ribosome it contacts the 23S rRNA (bridge B1a) and protein L5 of the 50S subunit (bridge B1b), connecting the 2 subunits; these bridges are implicated in subunit movement. Contacts the tRNAs in the A and P-sites. This Anaplasma phagocytophilum (strain HZ) protein is Small ribosomal subunit protein uS13.